Consider the following 178-residue polypeptide: Large ribosomal subunit protein uL13m (178 aa).

Ser2 is modified (N-acetylserine).

The protein belongs to the universal ribosomal protein uL13 family. As to quaternary structure, component of the mitochondrial large ribosomal subunit (mt-LSU). Mature mammalian 55S mitochondrial ribosomes consist of a small (28S) and a large (39S) subunit. The 28S small subunit contains a 12S ribosomal RNA (12S mt-rRNA) and 30 different proteins. The 39S large subunit contains a 16S rRNA (16S mt-rRNA), a copy of mitochondrial valine transfer RNA (mt-tRNA(Val)), which plays an integral structural role, and 52 different proteins. Interacts with OXA1L.

The protein localises to the mitochondrion. The protein is Large ribosomal subunit protein uL13m (MRPL13) of Homo sapiens (Human).